The following is a 217-amino-acid chain: N-(5'-phosphoribosyl)anthranilate isomerase (217 aa).

Belongs to the TrpF family.

The enzyme catalyses N-(5-phospho-beta-D-ribosyl)anthranilate = 1-(2-carboxyphenylamino)-1-deoxy-D-ribulose 5-phosphate. It participates in amino-acid biosynthesis; L-tryptophan biosynthesis; L-tryptophan from chorismate: step 3/5. This Synechococcus sp. (strain ATCC 27144 / PCC 6301 / SAUG 1402/1) (Anacystis nidulans) protein is N-(5'-phosphoribosyl)anthranilate isomerase.